We begin with the raw amino-acid sequence, 455 residues long: tRNA modification GTPase MnmE (455 aa).

The (6S)-5-formyl-5,6,7,8-tetrahydrofolate site is built by Arg-24, Glu-81, and Lys-121. Residues 217-378 (GMKVVIAGRP…LREHLKDCMG (162 aa)) form the TrmE-type G domain. Asn-227 provides a ligand contact to K(+). GTP contacts are provided by residues 227-232 (NAGKSS), 246-252 (TDIAGTT), 271-274 (DTAG), and 359-361 (SAR). Ser-231 provides a ligand contact to Mg(2+). K(+) is bound by residues Thr-246, Ile-248, and Thr-251. Thr-252 contributes to the Mg(2+) binding site. (6S)-5-formyl-5,6,7,8-tetrahydrofolate is bound at residue Lys-455.

Belongs to the TRAFAC class TrmE-Era-EngA-EngB-Septin-like GTPase superfamily. TrmE GTPase family. Homodimer. Heterotetramer of two MnmE and two MnmG subunits. K(+) is required as a cofactor.

It is found in the cytoplasm. Exhibits a very high intrinsic GTPase hydrolysis rate. Involved in the addition of a carboxymethylaminomethyl (cmnm) group at the wobble position (U34) of certain tRNAs, forming tRNA-cmnm(5)s(2)U34. The chain is tRNA modification GTPase MnmE from Photobacterium profundum (strain SS9).